The sequence spans 422 residues: Tyrosine--tRNA ligase 1 (422 aa).

Residue Tyr35 coordinates L-tyrosine. The short motif at 40-49 is the 'HIGH' region element; it reads PTADSLHIGH. L-tyrosine is bound by residues Tyr170 and Gln174. Residues 232 to 236 carry the 'KMSKS' region motif; the sequence is KFGKT. Lys235 is an ATP binding site. In terms of domain architecture, S4 RNA-binding spans 355-421; that stretch reads LSLVDVLVQS…GKKKYFLVTY (67 aa).

The protein belongs to the class-I aminoacyl-tRNA synthetase family. TyrS type 1 subfamily. Homodimer.

The protein localises to the cytoplasm. It carries out the reaction tRNA(Tyr) + L-tyrosine + ATP = L-tyrosyl-tRNA(Tyr) + AMP + diphosphate + H(+). Its function is as follows. Catalyzes the attachment of tyrosine to tRNA(Tyr) in a two-step reaction: tyrosine is first activated by ATP to form Tyr-AMP and then transferred to the acceptor end of tRNA(Tyr). This chain is Tyrosine--tRNA ligase 1, found in Bacillus subtilis (strain 168).